A 218-amino-acid chain; its full sequence is 3,4-dihydroxy-2-butanone 4-phosphate synthase (218 aa).

Residues 38–39, aspartate 43, 151–155, and glutamate 175 each bind D-ribulose 5-phosphate; these read RE and RRGHT. Mg(2+) is bound at residue glutamate 39. Residues 125–151 form a disordered region; it reads PHAKPEDLARPGHVFPLRARPGGVMTR. Mg(2+) is bound at residue histidine 154.

It belongs to the DHBP synthase family. As to quaternary structure, homodimer. It depends on Mg(2+) as a cofactor. Requires Mn(2+) as cofactor.

The enzyme catalyses D-ribulose 5-phosphate = (2S)-2-hydroxy-3-oxobutyl phosphate + formate + H(+). It participates in cofactor biosynthesis; riboflavin biosynthesis; 2-hydroxy-3-oxobutyl phosphate from D-ribulose 5-phosphate: step 1/1. In terms of biological role, catalyzes the conversion of D-ribulose 5-phosphate to formate and 3,4-dihydroxy-2-butanone 4-phosphate. The chain is 3,4-dihydroxy-2-butanone 4-phosphate synthase from Vibrio parahaemolyticus serotype O3:K6 (strain RIMD 2210633).